We begin with the raw amino-acid sequence, 207 residues long: LexA repressor (207 aa).

Residues 33–52 constitute a DNA-binding region (H-T-H motif); the sequence is VKEMSETFGISHASVHDRIN. Active-site for autocatalytic cleavage activity residues include serine 129 and lysine 166.

The protein belongs to the peptidase S24 family. Homodimer.

It catalyses the reaction Hydrolysis of Ala-|-Gly bond in repressor LexA.. Represses a number of genes involved in the response to DNA damage (SOS response), including recA and lexA. In the presence of single-stranded DNA, RecA interacts with LexA causing an autocatalytic cleavage which disrupts the DNA-binding part of LexA, leading to derepression of the SOS regulon and eventually DNA repair. This is LexA repressor from Oleidesulfovibrio alaskensis (strain ATCC BAA-1058 / DSM 17464 / G20) (Desulfovibrio alaskensis).